The primary structure comprises 295 residues: Glutamyl-Q tRNA(Asp) synthetase (295 aa).

L-glutamate-binding positions include 5–9 (RFAPS) and E41. The 'HIGH' region signature appears at 8–18 (PSPTGLLHIGS). Residues C97, C99, Y117, and C121 each coordinate Zn(2+). 2 residues coordinate L-glutamate: Y178 and R196. Residues 234–238 (KWSKQ) carry the 'KMSKS' region motif. Position 237 (K237) interacts with ATP.

The protein belongs to the class-I aminoacyl-tRNA synthetase family. GluQ subfamily. Zn(2+) is required as a cofactor.

In terms of biological role, catalyzes the tRNA-independent activation of glutamate in presence of ATP and the subsequent transfer of glutamate onto a tRNA(Asp). Glutamate is transferred on the 2-amino-5-(4,5-dihydroxy-2-cyclopenten-1-yl) moiety of the queuosine in the wobble position of the QUC anticodon. This is Glutamyl-Q tRNA(Asp) synthetase from Neisseria gonorrhoeae (strain ATCC 700825 / FA 1090).